We begin with the raw amino-acid sequence, 241 residues long: MHQFQQDNQYFIFNFDRTFEQATEFFQAEFWQKQERVIGSAKGRGTTYFLQTEDWFGVNCALRHYYRGGLWGKLNKDRYRFSALETTRSFAEFHLLQRLYEAGLPVPKPIAARIQKGKLGICYQADILTEKIENAQDLTALLQTQTLPKETWRQIGRLIRKLHDLQICHTDLNAHNILLQQAEQEQKCWLIDFDKCGKKSGDFWKAQNLNRLKRSFEKEVGRMNIQFTEQNWADLTAAYHQ.

Residue Asp171 is part of the active site.

It belongs to the protein kinase superfamily. KdkA/RfaP family.

Its subcellular location is the cell inner membrane. It catalyses the reaction an alpha-Kdo-(2-&gt;6)-lipid IVA + ATP = a 4-O-phospho-alpha-Kdo-(2-&gt;6)-lipid IVA + ADP + H(+). It participates in bacterial outer membrane biogenesis; LPS core biosynthesis. Its function is as follows. Catalyzes the ATP-dependent phosphorylation of the 3-deoxy-D-manno-octulosonic acid (Kdo) residue in Kdo-lipid IV(A) at the 4-OH position. The sequence is that of 3-deoxy-D-manno-octulosonic acid kinase from Haemophilus influenzae (strain 86-028NP).